Consider the following 303-residue polypeptide: Polyisoprenyl-teichoic acid--peptidoglycan teichoic acid transferase TagU (303 aa).

At 1–4 (MKKK) the chain is on the cytoplasmic side. The chain crosses the membrane as a helical; Signal-anchor for type II membrane protein span at residues 5–25 (ILFWVLGILGVLIIGGGIYAY). The Extracellular segment spans residues 26 to 303 (NVYSSVSNTL…KLRSHLEVTK (278 aa)).

This sequence belongs to the LytR/CpsA/Psr (LCP) family.

Its subcellular location is the cell membrane. It functions in the pathway cell wall biogenesis. Functionally, may catalyze the final step in cell wall teichoic acid biosynthesis, the transfer of the anionic cell wall polymers (APs) from their lipid-linked precursor to the cell wall peptidoglycan (PG). This is Polyisoprenyl-teichoic acid--peptidoglycan teichoic acid transferase TagU from Bacillus cereus (strain AH820).